We begin with the raw amino-acid sequence, 326 residues long: uncharacterized protein (326 aa).

28-35 (GPINSGKT) contacts ATP.

This sequence belongs to the archaeal ATPase family.

This is an uncharacterized protein from Pyrococcus abyssi (strain GE5 / Orsay).